Reading from the N-terminus, the 103-residue chain is UPF0235 protein RHECIAT_CH0004196 (103 aa).

The protein belongs to the UPF0235 family.

This is UPF0235 protein RHECIAT_CH0004196 from Rhizobium etli (strain CIAT 652).